We begin with the raw amino-acid sequence, 624 residues long: Matrilin-4 (624 aa).

The first 21 residues, 1-21 (MRGPCCWPLSLLLLFLQSWET), serve as a signal peptide directing secretion. A VWFA 1 domain is found at 36–215 (DLVFMIDSSR…EFGLQFQGRL (180 aa)). N-linked (GlcNAc...) asparagine glycosylation occurs at asparagine 71. 4 consecutive EGF-like domains span residues 217–257 (GKDL…KNCL), 258–298 (ALDL…RSCR), 299–339 (AIDY…RSCR), and 340–380 (VRDF…KSCD). 12 cysteine pairs are disulfide-bonded: cysteine 221/cysteine 232, cysteine 228/cysteine 241, cysteine 243/cysteine 256, cysteine 262/cysteine 273, cysteine 269/cysteine 282, cysteine 284/cysteine 297, cysteine 303/cysteine 314, cysteine 310/cysteine 323, cysteine 325/cysteine 338, cysteine 344/cysteine 355, cysteine 351/cysteine 364, and cysteine 366/cysteine 379. Asparagine 307 is a glycosylation site (N-linked (GlcNAc...) asparagine). The 176-residue stretch at 388–563 (DLVLLVDGSK…STMTHLLENL (176 aa)) folds into the VWFA 2 domain. Residues 590–623 (EFQGRTLGALESLTQNLARLTERLEELENQLASR) adopt a coiled-coil conformation.

Interacts with COMP. In terms of tissue distribution, lung, brain, sternum, kidney and heart.

The protein localises to the secreted. Functionally, major component of the extracellular matrix of cartilage. This Mus musculus (Mouse) protein is Matrilin-4 (Matn4).